The chain runs to 455 residues: Beta-glucosidase A (455 aa).

The active-site Proton donor is the E165. The active-site Nucleophile is E363.

Belongs to the glycosyl hydrolase 1 family.

The enzyme catalyses Hydrolysis of terminal, non-reducing beta-D-glucosyl residues with release of beta-D-glucose.. This Caldicellulosiruptor saccharolyticus (Caldocellum saccharolyticum) protein is Beta-glucosidase A (bglA).